The chain runs to 212 residues: uncharacterized protein (212 aa).

This is an uncharacterized protein from Dryophytes versicolor (chameleon treefrog).